Here is a 778-residue protein sequence, read N- to C-terminus: Arf-GAP with coiled-coil, ANK repeat and PH domain-containing protein 2 (778 aa).

One can recognise a BAR domain in the interval 1-226 (MKMTVDFEEC…MKDLGAQLDR (226 aa)). In terms of domain architecture, PH spans 266-361 (GIVMEGYLFK…WIKAVQTSIA (96 aa)). Positions 371–391 (SEKLDKKSSPSTGSLDSGNES) are disordered. A compositionally biased stretch (polar residues) spans 379-388 (SPSTGSLDSG). Phosphoserine occurs at positions 384 and 387. Residues 399-520 (ESALQRVQCV…KFVDKYSVSS (122 aa)) enclose the Arf-GAP domain. The segment at 414–437 (CCDCGLADPRWASINLGITLCIEC) adopts a C4-type zinc-finger fold. Residues 518 to 596 (VSSSPPEQEK…EPEGERQDSS (79 aa)) form a disordered region. At Ser-521 the chain carries Phosphoserine. A compositionally biased stretch (basic and acidic residues) spans 524 to 539 (EQEKKVVSKDSEEKRL). Residues 550 to 569 (VRTSIQSSVKSNDSGIQQSS) show a composition bias toward polar residues. Ser-581 and Ser-584 each carry phosphoserine. ANK repeat units lie at residues 640–669 (NKAT…NVNQ), 673–702 (QGRG…NQHA), and 706–735 (EGKD…NEEM). Position 742 is a phosphotyrosine (Tyr-742). Phosphoserine is present on Ser-775.

Interacts with RAB35 (GTP-bound form); the interaction is direct and probably recruits ACAP2 to membranes. Interacts with MICALL1; the interaction is indirect through RAB35.

Its subcellular location is the endosome membrane. The protein localises to the cell membrane. With respect to regulation, GAP activity stimulated by phosphatidylinositol 4,5-bisphosphate (PIP2) and phosphatidic acid. Its function is as follows. GTPase-activating protein (GAP) for ADP ribosylation factor 6 (ARF6). Doesn't show GAP activity for RAB35. In Oryctolagus cuniculus (Rabbit), this protein is Arf-GAP with coiled-coil, ANK repeat and PH domain-containing protein 2 (ACAP2).